The sequence spans 110 residues: Prothymosin alpha (110 aa).

Met-1 is modified (N-acetylmethionine). The disordered stretch occupies residues 1 to 110; it reads MSDAAVDTSS…TKKQKTDEDD (110 aa). Ser-2 carries the N-acetylserine; in Prothymosin alpha, N-terminally processed modification. The residue at position 2 (Ser-2) is a Phosphoserine. Position 8 is a phosphothreonine; by CK2 (Thr-8). Ser-9 and Ser-10 each carry phosphoserine. Phosphothreonine; by CK2 is present on residues Thr-13 and Thr-14. Residues 13–31 are compositionally biased toward basic and acidic residues; sequence TTKDLKEKKEVVEEAENGR. Lys-15 carries the N6-acetyllysine; alternate modification. At Lys-15 the chain carries N6-succinyllysine; alternate. Positions 32–41 are enriched in low complexity; it reads EAPANGNANE. Acidic residues predominate over residues 42-83; it reads ENGEQEADNEVDEEEEEGGEEEEEEEEGDGEEEDGDEDEEAE. Basic and acidic residues predominate over residues 100–110; that stretch reads DTKKQKTDEDD. Position 101 is a phosphothreonine (Thr-101). Lys-102 is modified (N6-acetyllysine; alternate). Residue Lys-102 forms a Glycyl lysine isopeptide (Lys-Gly) (interchain with G-Cter in SUMO2); alternate linkage. Thr-106 carries the phosphothreonine modification.

Belongs to the pro/parathymosin family. Interacts with NUPR1; regulates apoptotic process. Post-translationally, covalently linked to a small RNA of about 20 nucleotides.

Its subcellular location is the nucleus. Prothymosin alpha may mediate immune function by conferring resistance to certain opportunistic infections. The protein is Prothymosin alpha (PTMA) of Bos taurus (Bovine).